The following is a 98-amino-acid chain: Large ribosomal subunit protein uL23 (98 aa).

The protein belongs to the universal ribosomal protein uL23 family. In terms of assembly, part of the 50S ribosomal subunit. Contacts protein L29, and trigger factor when it is bound to the ribosome.

Functionally, one of the early assembly proteins it binds 23S rRNA. One of the proteins that surrounds the polypeptide exit tunnel on the outside of the ribosome. Forms the main docking site for trigger factor binding to the ribosome. This is Large ribosomal subunit protein uL23 from Lactobacillus gasseri (strain ATCC 33323 / DSM 20243 / BCRC 14619 / CIP 102991 / JCM 1131 / KCTC 3163 / NCIMB 11718 / NCTC 13722 / AM63).